A 406-amino-acid polypeptide reads, in one-letter code: Putative competence-damage inducible protein (406 aa).

This sequence belongs to the CinA family.

This is Putative competence-damage inducible protein from Natranaerobius thermophilus (strain ATCC BAA-1301 / DSM 18059 / JW/NM-WN-LF).